The sequence spans 500 residues: Protein dcd1B (500 aa).

The N-terminal stretch at 1-20 (MNLIKLFIICCLLISITVKS) is a signal peptide. Residues Asn284, Asn331, Asn441, Asn459, Asn474, and Asn475 are each glycosylated (N-linked (GlcNAc...) asparagine). Residues 464 to 500 (FSEQPPLPPPNNSSSSDSNSNSNSDSSSSSDSNSNSN) form a disordered region. The segment covering 475 to 500 (NSSSSDSNSNSNSDSSSSSDSNSNSN) has biased composition (low complexity).

The protein resides in the secreted. This Dictyostelium discoideum (Social amoeba) protein is Protein dcd1B (dcd1B).